The primary structure comprises 168 residues: Endoribonuclease YbeY (168 aa).

His126, His130, and His136 together coordinate Zn(2+).

This sequence belongs to the endoribonuclease YbeY family. Zn(2+) serves as cofactor.

Its subcellular location is the cytoplasm. Its function is as follows. Single strand-specific metallo-endoribonuclease involved in late-stage 70S ribosome quality control and in maturation of the 3' terminus of the 16S rRNA. In Rhizobium meliloti (strain 1021) (Ensifer meliloti), this protein is Endoribonuclease YbeY.